The chain runs to 169 residues: Translationally-controlled tumor protein homolog (169 aa).

Residues 1-169 (MIIYKDIVSG…FKDGLEEEKF (169 aa)) enclose the TCTP domain.

It belongs to the TCTP family.

The protein localises to the cytoplasm. Its function is as follows. Involved in calcium binding and microtubule stabilization. The polypeptide is Translationally-controlled tumor protein homolog (Branchiostoma belcheri (Amphioxus)).